Consider the following 34-residue polypeptide: Toxin Ptu1 (34 aa).

Disulfide bonds link cysteine 5–cysteine 20, cysteine 12–cysteine 26, and cysteine 19–cysteine 33.

It localises to the secreted. Its function is as follows. Binds reversibly and blocks N-type voltage-gated calcium channels (Cav). This Peirates turpis (Assassin bug) protein is Toxin Ptu1.